The sequence spans 305 residues: Probable GTP 3',8-cyclase (305 aa).

In terms of domain architecture, Radical SAM core spans 6–233 (RHGRPVMSLR…MQDRKKYYID (228 aa)). Arginine 15 lines the GTP pocket. [4Fe-4S] cluster-binding residues include cysteine 22 and cysteine 26. S-adenosyl-L-methionine is bound at residue tyrosine 28. Cysteine 29 is a [4Fe-4S] cluster binding site. Arginine 62 contributes to the GTP binding site. Glycine 66 is an S-adenosyl-L-methionine binding site. GTP is bound at residue threonine 92. Residue serine 116 coordinates S-adenosyl-L-methionine. Lysine 153 contacts GTP. Residues cysteine 249 and cysteine 252 each coordinate [4Fe-4S] cluster. Residue 254 to 256 (RLR) coordinates GTP. Cysteine 266 serves as a coordination point for [4Fe-4S] cluster.

The protein belongs to the radical SAM superfamily. MoaA family. The cofactor is [4Fe-4S] cluster.

The catalysed reaction is GTP + AH2 + S-adenosyl-L-methionine = (8S)-3',8-cyclo-7,8-dihydroguanosine 5'-triphosphate + 5'-deoxyadenosine + L-methionine + A + H(+). Its pathway is cofactor biosynthesis; molybdopterin biosynthesis. Functionally, catalyzes the cyclization of GTP to (8S)-3',8-cyclo-7,8-dihydroguanosine 5'-triphosphate. The chain is Probable GTP 3',8-cyclase from Methanothermobacter thermautotrophicus (strain ATCC 29096 / DSM 1053 / JCM 10044 / NBRC 100330 / Delta H) (Methanobacterium thermoautotrophicum).